Reading from the N-terminus, the 526-residue chain is Probable polyol transporter 4 (526 aa).

Disordered regions lie at residues 1–21 (MMKN…AVSV) and 28–47 (YQRM…AEAR). Basic and acidic residues predominate over residues 29–47 (QRMDSDAEESQNHREAEAR). A run of 12 helical transmembrane segments spans residues 63-83 (SLNN…VLFI), 92-112 (VQTE…SLAG), 125-145 (MALA…APSF), 153-173 (TLAG…IAEI), 180-200 (GFFT…GYVS), 215-235 (IMLA…CVIP), 300-320 (MLIV…DATV), 340-360 (AATV…TFLI), 371-391 (VSTI…TFLG), 395-415 (LGIT…SIGM), 437-457 (ALGA…FLSV), and 465-485 (GTFF…YVLV).

This sequence belongs to the major facilitator superfamily. Sugar transporter (TC 2.A.1.1) family.

The protein localises to the membrane. In terms of biological role, plasma membrane sugar-proton symporter. This is Probable polyol transporter 4 (PLT4) from Arabidopsis thaliana (Mouse-ear cress).